Consider the following 376-residue polypeptide: UDP-4-amino-4,6-dideoxy-N-acetyl-beta-L-altrosamine transaminase (376 aa).

Residues Tyr4, 24–27, Ala54, and Ser176 each bind substrate; that span reads EILT. Lys181 carries the post-translational modification N6-(pyridoxal phosphate)lysine. Residues Asn226 and 311–314 each bind substrate; that span reads QVHY.

It belongs to the DegT/DnrJ/EryC1 family.

The catalysed reaction is UDP-4-amino-4,6-dideoxy-N-acetyl-beta-L-altrosamine + 2-oxoglutarate = UDP-2-acetamido-2,6-dideoxy-beta-L-arabino-hex-4-ulose + L-glutamate. In terms of biological role, catalyzes the second step in the biosynthesis of pseudaminic acid, a sialic-acid-like sugar that is used to modify flagellin. Uses UDP-2-acetamido-2,6-dideoxy-beta-L-arabino-4-hexulose as substrate producing UDP-4-amino-4,6-dideoxy-beta-L-AltNAc. The sequence is that of UDP-4-amino-4,6-dideoxy-N-acetyl-beta-L-altrosamine transaminase (pseC) from Campylobacter jejuni subsp. jejuni serotype O:2 (strain ATCC 700819 / NCTC 11168).